The sequence spans 120 residues: MCSVEKIVRLRHNLLCHVRIHFKTKEDLDIRAFLFSLQRELHAVAFLNQGSIRTLYEKRVVDITSESVQSHAIIETARNFALPNTAEEEENMDRKPELQLSFKGSMTSKIIHIYVQPFDS.

The protein localises to the cytoplasm. The protein resides in the nucleus. This is an uncharacterized protein from Schizosaccharomyces pombe (strain 972 / ATCC 24843) (Fission yeast).